Reading from the N-terminus, the 208-residue chain is Uridine kinase (208 aa).

Position 12–19 (12–19 (GGSGGGKT)) interacts with ATP.

Belongs to the uridine kinase family.

The protein resides in the cytoplasm. It carries out the reaction uridine + ATP = UMP + ADP + H(+). The catalysed reaction is cytidine + ATP = CMP + ADP + H(+). It participates in pyrimidine metabolism; CTP biosynthesis via salvage pathway; CTP from cytidine: step 1/3. Its pathway is pyrimidine metabolism; UMP biosynthesis via salvage pathway; UMP from uridine: step 1/1. This Streptococcus pyogenes serotype M3 (strain ATCC BAA-595 / MGAS315) protein is Uridine kinase.